A 284-amino-acid polypeptide reads, in one-letter code: Pseudopaline exporter CntI (284 aa).

The next 10 helical transmembrane spans lie at 2–22 (VLDL…TFSV), 34–54 (LPAA…IYLL), 74–94 (GVMG…IPLA), 96–116 (ASIL…LFLG), 122–142 (AVYW…KPFS), 147–167 (SVYA…SVAI), 179–199 (IVFY…WNDF), 209–229 (GLLL…TRAF), 236–256 (IVAV…WLFW), and 259–279 (VPDA…IALS). EamA domains follow at residues 8-138 (SGVL…LMIV) and 151-279 (VVGL…IALS).

The protein belongs to the EamA transporter family.

The protein localises to the cell inner membrane. Its function is as follows. Transports the metallophore pseudopaline, which is involved in the acquisition of nickel and zinc, and thus enables bacterial growth inside the host, where metal access is limited. Is probably involved in the export of pseudopaline. Essential for iron acquisition during the interaction with airway mucus secretions (AMS). The protein is Pseudopaline exporter CntI of Pseudomonas aeruginosa (strain ATCC 15692 / DSM 22644 / CIP 104116 / JCM 14847 / LMG 12228 / 1C / PRS 101 / PAO1).